The following is a 373-amino-acid chain: Anhydro-N-acetylmuramic acid kinase (373 aa).

12–19 serves as a coordination point for ATP; it reads GTSLDGVD.

Belongs to the anhydro-N-acetylmuramic acid kinase family.

The catalysed reaction is 1,6-anhydro-N-acetyl-beta-muramate + ATP + H2O = N-acetyl-D-muramate 6-phosphate + ADP + H(+). It functions in the pathway amino-sugar metabolism; 1,6-anhydro-N-acetylmuramate degradation. It participates in cell wall biogenesis; peptidoglycan recycling. Catalyzes the specific phosphorylation of 1,6-anhydro-N-acetylmuramic acid (anhMurNAc) with the simultaneous cleavage of the 1,6-anhydro ring, generating MurNAc-6-P. Is required for the utilization of anhMurNAc either imported from the medium or derived from its own cell wall murein, and thus plays a role in cell wall recycling. This Serratia proteamaculans (strain 568) protein is Anhydro-N-acetylmuramic acid kinase.